A 538-amino-acid chain; its full sequence is Phosphoenolpyruvate carboxykinase (ATP) (538 aa).

Residues Arg-61, Tyr-195, and Lys-201 each coordinate substrate. Residues Lys-201, His-220, and 236–244 (GLSGTGKTT) contribute to the ATP site. Positions 201 and 220 each coordinate Mn(2+). Asp-257 is a Mn(2+) binding site. ATP-binding residues include Glu-285, Arg-323, and Thr-449. Arg-323 is a binding site for substrate.

This sequence belongs to the phosphoenolpyruvate carboxykinase (ATP) family. Mn(2+) is required as a cofactor.

The protein localises to the cytoplasm. It carries out the reaction oxaloacetate + ATP = phosphoenolpyruvate + ADP + CO2. It participates in carbohydrate biosynthesis; gluconeogenesis. In terms of biological role, involved in the gluconeogenesis. Catalyzes the conversion of oxaloacetate (OAA) to phosphoenolpyruvate (PEP) through direct phosphoryl transfer between the nucleoside triphosphate and OAA. The protein is Phosphoenolpyruvate carboxykinase (ATP) of Afipia carboxidovorans (strain ATCC 49405 / DSM 1227 / KCTC 32145 / OM5) (Oligotropha carboxidovorans).